Here is a 557-residue protein sequence, read N- to C-terminus: Urocanate hydratase (557 aa).

Residues 53–54, Gln131, 177–179, Glu197, Arg202, 243–244, 264–268, 274–275, and Tyr323 each bind NAD(+); these read GG, GMG, NA, QTSAH, and YL. Residue Cys411 is part of the active site. Residue Gly493 participates in NAD(+) binding.

This sequence belongs to the urocanase family. NAD(+) is required as a cofactor.

The protein resides in the cytoplasm. The catalysed reaction is 4-imidazolone-5-propanoate = trans-urocanate + H2O. The protein operates within amino-acid degradation; L-histidine degradation into L-glutamate; N-formimidoyl-L-glutamate from L-histidine: step 2/3. Catalyzes the conversion of urocanate to 4-imidazolone-5-propionate. The polypeptide is Urocanate hydratase (Pseudomonas entomophila (strain L48)).